A 259-amino-acid polypeptide reads, in one-letter code: Thiazole synthase (259 aa).

Residue K98 is the Schiff-base intermediate with DXP of the active site. 1-deoxy-D-xylulose 5-phosphate contacts are provided by residues G159, A185–G186, and N207–S208.

This sequence belongs to the ThiG family. Homotetramer. Forms heterodimers with either ThiH or ThiS.

The protein localises to the cytoplasm. It catalyses the reaction [ThiS sulfur-carrier protein]-C-terminal-Gly-aminoethanethioate + 2-iminoacetate + 1-deoxy-D-xylulose 5-phosphate = [ThiS sulfur-carrier protein]-C-terminal Gly-Gly + 2-[(2R,5Z)-2-carboxy-4-methylthiazol-5(2H)-ylidene]ethyl phosphate + 2 H2O + H(+). It functions in the pathway cofactor biosynthesis; thiamine diphosphate biosynthesis. In terms of biological role, catalyzes the rearrangement of 1-deoxy-D-xylulose 5-phosphate (DXP) to produce the thiazole phosphate moiety of thiamine. Sulfur is provided by the thiocarboxylate moiety of the carrier protein ThiS. In vitro, sulfur can be provided by H(2)S. The chain is Thiazole synthase from Chlorobium phaeovibrioides (strain DSM 265 / 1930) (Prosthecochloris vibrioformis (strain DSM 265)).